The primary structure comprises 91 residues: Acylphosphatase (91 aa).

The Acylphosphatase-like domain maps to 6 to 91 (CMRCYISGRV…WEDYISFDVL (86 aa)). Catalysis depends on residues Arg21 and Asn39.

This sequence belongs to the acylphosphatase family.

The catalysed reaction is an acyl phosphate + H2O = a carboxylate + phosphate + H(+). This is Acylphosphatase (acyP) from Legionella pneumophila (strain Corby).